The chain runs to 24 residues: Brevinin-1SPa (24 aa).

Cysteine 18 and cysteine 24 are oxidised to a cystine.

In terms of tissue distribution, expressed by the skin glands.

The protein resides in the secreted. Functionally, antimicrobial peptide with activity against Gram-negative and Gram-positive bacteria (MIC=13 uM against E.coli, MIC=3 uM against S.aureus) and fungi (MIC=6 uM against C.albicans). Shows hemolytic activity on human erythrocytes (HC(50)=7 uM). The chain is Brevinin-1SPa from Lithobates septentrionalis (Mink frog).